We begin with the raw amino-acid sequence, 37 residues long: Large ribosomal subunit protein bL36 (37 aa).

Belongs to the bacterial ribosomal protein bL36 family.

The chain is Large ribosomal subunit protein bL36 from Magnetococcus marinus (strain ATCC BAA-1437 / JCM 17883 / MC-1).